A 264-amino-acid polypeptide reads, in one-letter code: MARGLKKHLKRLNAPKHWMLDKLGGAFAPKPSSGPHKSRECLPLVIIMRNRLKYALTYREVISILMQRQVMVDGKVRTDKTYPAGFMDVVSIPKTNENFRLLYDTKGRFRLHSLRDEESKFKLCKVRSVQFGQKGIPYLNTYDGRTIRYPDPLIKANDTIKLDLESNKIVDFIKFDVGNVVMVTGGRNRGRVGVIKNREKHKGSFETLHIQDSQGHEFATRLGNVFTLGKGTKPWVSLPKGKGIKLTIIEDARKRLAAQSATPA.

Positions 42-104 constitute an S4 RNA-binding domain; sequence LPLVIIMRNR…TNENFRLLYD (63 aa).

It belongs to the eukaryotic ribosomal protein eS4 family.

Its subcellular location is the cytoplasm. In Solanum tuberosum (Potato), this protein is Small ribosomal subunit protein eS4 (RPS4).